The sequence spans 343 residues: GTPase Obg (343 aa).

Positions Met1–Ile159 constitute an Obg domain. Residues Ala160–Asp327 enclose the OBG-type G domain. GTP is bound by residues Gly166–Ser173, Phe191–His195, Asp212–Gly215, Ser279–Asp282, and Ser308–Ala310. Ser173 and Thr193 together coordinate Mg(2+).

This sequence belongs to the TRAFAC class OBG-HflX-like GTPase superfamily. OBG GTPase family. As to quaternary structure, monomer. Requires Mg(2+) as cofactor.

The protein localises to the cytoplasm. Its function is as follows. An essential GTPase which binds GTP, GDP and possibly (p)ppGpp with moderate affinity, with high nucleotide exchange rates and a fairly low GTP hydrolysis rate. Plays a role in control of the cell cycle, stress response, ribosome biogenesis and in those bacteria that undergo differentiation, in morphogenesis control. This chain is GTPase Obg, found in Methylobacterium sp. (strain 4-46).